A 78-amino-acid polypeptide reads, in one-letter code: Large ribosomal subunit protein uL29 (78 aa).

It belongs to the universal ribosomal protein uL29 family.

In Salinispora arenicola (strain CNS-205), this protein is Large ribosomal subunit protein uL29.